Consider the following 335-residue polypeptide: Holliday junction branch migration complex subunit RuvB (335 aa).

The segment at 1 to 183 is large ATPase domain (RuvB-L); it reads MDERIISSET…FGVIDHLEFY (183 aa). ATP contacts are provided by residues leucine 22, arginine 23, glycine 64, lysine 67, threonine 68, threonine 69, 130 to 132, arginine 173, tyrosine 183, and arginine 220; that span reads EDY. Threonine 68 contributes to the Mg(2+) binding site. The tract at residues 184 to 254 is small ATPAse domain (RuvB-S); that stretch reads TEEQLTEIVL…LAKEALTLLQ (71 aa). The tract at residues 257-335 is head domain (RuvB-H); that stretch reads PRGLDTIDQK…HLGISYEKEV (79 aa). DNA is bound by residues arginine 293, arginine 312, and arginine 317.

It belongs to the RuvB family. As to quaternary structure, homohexamer. Forms an RuvA(8)-RuvB(12)-Holliday junction (HJ) complex. HJ DNA is sandwiched between 2 RuvA tetramers; dsDNA enters through RuvA and exits via RuvB. An RuvB hexamer assembles on each DNA strand where it exits the tetramer. Each RuvB hexamer is contacted by two RuvA subunits (via domain III) on 2 adjacent RuvB subunits; this complex drives branch migration. In the full resolvosome a probable DNA-RuvA(4)-RuvB(12)-RuvC(2) complex forms which resolves the HJ.

The protein resides in the cytoplasm. It carries out the reaction ATP + H2O = ADP + phosphate + H(+). The RuvA-RuvB-RuvC complex processes Holliday junction (HJ) DNA during genetic recombination and DNA repair, while the RuvA-RuvB complex plays an important role in the rescue of blocked DNA replication forks via replication fork reversal (RFR). RuvA specifically binds to HJ cruciform DNA, conferring on it an open structure. The RuvB hexamer acts as an ATP-dependent pump, pulling dsDNA into and through the RuvAB complex. RuvB forms 2 homohexamers on either side of HJ DNA bound by 1 or 2 RuvA tetramers; 4 subunits per hexamer contact DNA at a time. Coordinated motions by a converter formed by DNA-disengaged RuvB subunits stimulates ATP hydrolysis and nucleotide exchange. Immobilization of the converter enables RuvB to convert the ATP-contained energy into a lever motion, pulling 2 nucleotides of DNA out of the RuvA tetramer per ATP hydrolyzed, thus driving DNA branch migration. The RuvB motors rotate together with the DNA substrate, which together with the progressing nucleotide cycle form the mechanistic basis for DNA recombination by continuous HJ branch migration. Branch migration allows RuvC to scan DNA until it finds its consensus sequence, where it cleaves and resolves cruciform DNA. The polypeptide is Holliday junction branch migration complex subunit RuvB (Listeria monocytogenes serotype 4b (strain CLIP80459)).